The following is a 189-amino-acid chain: Protein jagunal homolog (189 aa).

The Cytoplasmic portion of the chain corresponds to 1 to 34 (MSSRGVRAAGTDGTDFQNRQRVAQHYQESAQYKS). The helical transmembrane segment at 35 to 55 (ILKWFFVPHFLILVFMWLKVG) threads the bilayer. Residues 56-78 (SELLRTNFGWKNAFFDRLDMPSA) lie on the Lumenal side of the membrane. Residues 79 to 99 (YPWEYVWCFSFIPIVLAIYSF) form a helical membrane-spanning segment. Residues 100–105 (QRNKLK) are Cytoplasmic-facing. A helical membrane pass occupies residues 106-126 (ILHYAYYAEFVVGIFPCMIGL). The Lumenal portion of the chain corresponds to 127–150 (GGQLPELMEYAQDMEGSNTPTFKG). The chain crosses the membrane as a helical span at residues 151–171 (IFPMVIIWYIFFAVALQIHGF). Residues 172 to 189 (SMYFMHHLAAAWAPVKRD) lie on the Cytoplasmic side of the membrane.

This sequence belongs to the jagunal family.

Its subcellular location is the endoplasmic reticulum membrane. This Caenorhabditis elegans protein is Protein jagunal homolog.